Consider the following 161-residue polypeptide: MTDHDERTFVMVKPDGVQRGLIGDIVTRLETKGLKMVGGKFMRIDEELAHEHYAEHEDKPFFDGLVSFITSGPVFAMVWEGADATRQVRQLMGATDAQDAAPGTIRGDYGNDLGHNLIHGSDHEDEGANEREIALFFDDDELVDWDRDASAWVYEDLADHD.

The ATP site is built by Lys13, Phe61, Arg89, Thr95, Arg106, and Asn116. His119 acts as the Pros-phosphohistidine intermediate in catalysis.

Belongs to the NDK family. The cofactor is Mg(2+).

The protein localises to the cytoplasm. The enzyme catalyses a 2'-deoxyribonucleoside 5'-diphosphate + ATP = a 2'-deoxyribonucleoside 5'-triphosphate + ADP. It carries out the reaction a ribonucleoside 5'-diphosphate + ATP = a ribonucleoside 5'-triphosphate + ADP. Major role in the synthesis of nucleoside triphosphates other than ATP. The ATP gamma phosphate is transferred to the NDP beta phosphate via a ping-pong mechanism, using a phosphorylated active-site intermediate. The chain is Nucleoside diphosphate kinase from Halobacterium salinarum (strain ATCC 29341 / DSM 671 / R1).